The primary structure comprises 586 residues: MKYILVTGGVISGIGKGIIASSIGTILKSCGLRVTAIKIDPYINIDAGTFSPYEHGEVFVLNDGGEVDLDLGNYERFLDINLYKDNNITTGKIYQHVINKERRGDYLGKTVQVVPHITDAVQEWVMNQAMVPVDGHKEEPQICVIELGGTIGDIEGMPFVEAFRQFQFKAKRENFCNIHVSLVPQPSATGEQKTKPTQNSVRALRGLGLSPDLIVCRSSTPIEMAVKEKISMFCHVNPEQVICIHDVSSTYRVPVLLEEQGIIKYFKERLDLPIGDSASSLLSKWRNMADRYERLQKTCSIALVGKYTKLRDCYASVFKALEHSALAINHKLNLMYIDSIDLEQTTEVEDPVKFHEAWQKLCKADGVLVPGGFGIRGTLGKLQAISWARSRKIPFLGVCLGMQLAVIEFARNCLNLKDADSTEFEPNARVPVVIDMPEHNPGNLGGTMRLGIRRTVFKTENSILRKLYGDVPFIEERHRHRYEVNPSLISQLEQKDLSFVGQDVDGERMEIIELANHPYFVGVQFHPEFSSRPMKPSPPYLGLLLAATGNLNAYLLQGCKLSSSDRYSDASDDSFSEPRLAELEIS.

Positions 300–554 (SIALVGKYTK…LAATGNLNAY (255 aa)) constitute a Glutamine amidotransferase type-1 domain. Residues Cys399, His526, and Glu528 each act as for GATase activity in the active site. Residues 564 to 586 (SDRYSDASDDSFSEPRLAELEIS) form a disordered region. Ser568, Ser571, and Ser574 each carry phosphoserine.

Belongs to the CTP synthase family.

It catalyses the reaction UTP + L-glutamine + ATP + H2O = CTP + L-glutamate + ADP + phosphate + 2 H(+). It participates in pyrimidine metabolism; CTP biosynthesis via de novo pathway; CTP from UDP: step 2/2. In terms of biological role, catalyzes the ATP-dependent amination of UTP to CTP with either L-glutamine or ammonia as the source of nitrogen. Constitutes the rate-limiting enzyme in the synthesis of cytosine nucleotides. The sequence is that of CTP synthase 2 (CTPS2) from Bos taurus (Bovine).